The primary structure comprises 830 residues: Kinesin-like protein KIN-14B (830 aa).

Residues 56–97 (ENISDDNTESEAKVQKIQDELVSLNAQLKQITLQRREALNNY) are a coiled coil. The Kinesin motor domain occupies 103-425 (NIRVFCRIRP…LGFATRVRSI (323 aa)). 182–189 (GQTGSGKT) lines the ATP pocket. A coiled-coil region spans residues 434-476 (EMKARKETLLIDLGQKVNDLEHECEDIRRKIKNLEESMEHLTG).

This sequence belongs to the TRAFAC class myosin-kinesin ATPase superfamily. Kinesin family. KIN-14 subfamily.

The protein is Kinesin-like protein KIN-14B of Oryza sativa subsp. japonica (Rice).